The chain runs to 142 residues: MKTFSAKPKEVRRDWYLVDANGVTLGRLASEIARRLRGKHKAIYTPHIDTGDYIVVVNAEKIRATGKKMAQKHYYRHSGYPGGIKSLTLEKLLERAPERAIELAVKGMLPKNPLGRAMFRKLNVYGGSNHPHIAQQPQPLKI.

This sequence belongs to the universal ribosomal protein uL13 family. As to quaternary structure, part of the 50S ribosomal subunit.

Its function is as follows. This protein is one of the early assembly proteins of the 50S ribosomal subunit, although it is not seen to bind rRNA by itself. It is important during the early stages of 50S assembly. The protein is Large ribosomal subunit protein uL13 of Nitrosococcus oceani (strain ATCC 19707 / BCRC 17464 / JCM 30415 / NCIMB 11848 / C-107).